We begin with the raw amino-acid sequence, 150 residues long: Putative pre-16S rRNA nuclease (150 aa).

This sequence belongs to the YqgF nuclease family.

It is found in the cytoplasm. In terms of biological role, could be a nuclease involved in processing of the 5'-end of pre-16S rRNA. In Protochlamydia amoebophila (strain UWE25), this protein is Putative pre-16S rRNA nuclease.